Here is a 192-residue protein sequence, read N- to C-terminus: Transmembrane protein 11, mitochondrial (192 aa).

The tract at residues 1–20 (MAAWGRRRLGPGSSGGSARE) is disordered. Helical transmembrane passes span 84–100 (TAVL…LALP) and 107–124 (ISLP…LYGI).

It belongs to the TMEM11 family. As to quaternary structure, associates with the mitochondrial contact site and cristae organizing system (MICOS) complex, composed of at least MICOS10/MIC10, CHCHD3/MIC19, CHCHD6/MIC25, APOOL/MIC27, IMMT/MIC60, APOO/MIC23/MIC26 and QIL1/MIC13. This complex was also known under the names MINOS or MitOS complex. The MICOS complex associates with mitochondrial outer membrane proteins SAMM50, MTX1, MTX2 and DNAJC11, mitochondrial inner membrane protein TMEM11 and with HSPA9. Interacts with IMMT/MIC60.

The protein resides in the mitochondrion inner membrane. Plays a role in mitochondrial morphogenesis. In Homo sapiens (Human), this protein is Transmembrane protein 11, mitochondrial (TMEM11).